Reading from the N-terminus, the 680-residue chain is Nodulation protein NolNO (680 aa).

This sequence belongs to the NodU/CmcH family.

The protein localises to the cytoplasm. Its function is as follows. Involved in the O-carbamoylation of nod factors. The protein is Nodulation protein NolNO (nolO) of Sinorhizobium fredii (strain NBRC 101917 / NGR234).